A 317-amino-acid polypeptide reads, in one-letter code: Small glutamine-rich tetratricopeptide repeat-containing protein 2 (317 aa).

TPR repeat units follow at residues 14 to 48, 83 to 116, 118 to 150, and 151 to 184; these read LKQA…KPEE, AEKL…DPTS, VYYS…DPHH, and ARAF…DPNN. Positions 198 to 215 are enriched in polar residues; the sequence is LNQPSDSSATSGADQART. Disordered regions lie at residues 198–224 and 298–317; these read LNQP…PDLG and MNNN…PPPQ.

The protein belongs to the SGT family.

The protein localises to the cytoplasm. The protein resides in the nucleus. In terms of biological role, co-chaperone that binds to the molecular chaperone Hsp70 and regulates Hsp70 ATPase activity. The sequence is that of Small glutamine-rich tetratricopeptide repeat-containing protein 2 (sgt2) from Schizosaccharomyces pombe (strain 972 / ATCC 24843) (Fission yeast).